Consider the following 212-residue polypeptide: Thymidylate kinase (212 aa).

13–20 is an ATP binding site; that stretch reads GLEGAGKS.

Belongs to the thymidylate kinase family.

The catalysed reaction is dTMP + ATP = dTDP + ADP. Its function is as follows. Phosphorylation of dTMP to form dTDP in both de novo and salvage pathways of dTTP synthesis. In Legionella pneumophila (strain Corby), this protein is Thymidylate kinase.